A 214-amino-acid polypeptide reads, in one-letter code: MADS-box protein CMB2 (214 aa).

In terms of domain architecture, MADS-box spans 3–58 (RGKLEIRKIENKTNRQVTFSKRRNGIMKKAQELTVLCDAKVSLLMISSTHKLHHYL). The 91-residue stretch at 84 to 174 (WERMQEQHRK…VMELEAKFRG (91 aa)) folds into the K-box domain.

As to expression, in flowers. Not found in vegetative tissues.

The protein resides in the nucleus. The protein is MADS-box protein CMB2 (CMB2) of Dianthus caryophyllus (Carnation).